A 361-amino-acid polypeptide reads, in one-letter code: GDSL esterase/lipase At2g40250 (361 aa).

The signal sequence occupies residues 1-28 (MNRNQHKPMFVTFLINILLLQLLNLTNA). Residue S43 is the Nucleophile of the active site. Catalysis depends on residues D337 and H340.

The protein belongs to the 'GDSL' lipolytic enzyme family.

It localises to the secreted. The polypeptide is GDSL esterase/lipase At2g40250 (Arabidopsis thaliana (Mouse-ear cress)).